A 261-amino-acid polypeptide reads, in one-letter code: Indole-3-glycerol phosphate synthase (261 aa).

Belongs to the TrpC family.

It carries out the reaction 1-(2-carboxyphenylamino)-1-deoxy-D-ribulose 5-phosphate + H(+) = (1S,2R)-1-C-(indol-3-yl)glycerol 3-phosphate + CO2 + H2O. It functions in the pathway amino-acid biosynthesis; L-tryptophan biosynthesis; L-tryptophan from chorismate: step 4/5. The chain is Indole-3-glycerol phosphate synthase from Burkholderia lata (strain ATCC 17760 / DSM 23089 / LMG 22485 / NCIMB 9086 / R18194 / 383).